The following is a 774-amino-acid chain: MRLSKVSDIKSTGVSNYKNFNSKNSSKYSLMEVSKKNEKKNSLGAFHSKKILLIFGIIYVVLLNAYICGDKYEKAVDYGFRESRILAEGEDTCARKEKTTLRKSKQKTSTRTVATQTKKDEENKSVVTEEQKVESDSEKQKRTKKVVKKQINIGDTENQKEGKNVKKVIKKEKKKEESGKPEENKHANEASKKKEPKASKVSQKPSTSTRSNNEVKIRAASNQETLTSADPEGQIMREYAADPEYRKHLEIFYKILTNTDPNDEVERRNADNKEDLTSADPEGQIMREYASDPEYRKHLEIFYKILTNTDPNDDVERRNADNKEDLTSADPEGQIMREYAADPEYRKHLEVFHKILTNTDPNDEVERRNADNKEDLTSADPEGQIMREYAADPEYRKHLEIFHKILTNTDPNDEVERRNADNKEDLTSADPEGQIMREYAADPEYRKHLEVFHKILTNTDPNDEVERRNADNKELTSSDPEGQIMREYAADPEYRKHLEIFHKILTNTDPNDEVERRNADNKEDLTSADPEGQIMREYAADPEYRKHLEIFYKILTNTDPNDEVERRNADNKEELTSSDPEGQIMREYAADPEYRKHLEIFHKILTNTDPNDEVERRNADNKEDLTSADPEGQIMREYAADPEYRKHLEIFYKILTNTDPNDEVERRNADNKEDLTSADPEGQIMREYASDPEYRKHLEIFYKILTNTDPNDDVERRNADNKEDLTSADPEGQIMREYAADPEYRKHLEIFHKILTNTDPNDEVERQNADNNEA.

Residues 84–88 carry the PEXEL motif motif; the sequence is RILAE. 10 disordered regions span residues 97–243, 256–291, 310–334, 358–383, 410–434, 458–481, 509–533, 609–632, 661–682, and 709–734; these read EKTT…AADP, LTNT…EYAS, DPND…PEGQ, NTDP…DPEG, NTDP…SDPE, DPND…DPEG, NDEV…DPEG, and DPND…EGQI. Composition is skewed to basic and acidic residues over residues 117–140 and 174–198; these read TKKD…SEKQ and KKEE…EPKA. The segment covering 201 to 228 has biased composition (polar residues); the sequence is VSQKPSTSTRSNNEVKIRAASNQETLTS. 11 GBP repeats span residues 226–275, 276–325, 326–375, 376–425, 426–474, 475–524, 525–574, 575–624, 625–674, 675–724, and 725–774; these read LTSA…NKED, LTSA…DNKE, LTSS…NKED, LTSA…NKEE, and LTSA…NNEA. 9 stretches are compositionally biased toward basic and acidic residues: residues 264–276, 314–326, 364–376, 414–426, 464–476, 513–525, 613–625, 663–675, and 713–725; these read EVER…KEDL, DVER…KEDL, and EVER…KELT.

As to quaternary structure, interacts with host glycophorin.

The protein resides in the secreted. Its subcellular location is the cell surface. It is found in the host cytoplasm. Involved in merozoite invasion of host erythrocytes. The sequence is that of Glycophorin-binding protein 130 from Plasmodium falciparum (isolate FCR-3 / Gambia).